The primary structure comprises 330 residues: Aspartate--ammonia ligase (330 aa).

Belongs to the class-II aminoacyl-tRNA synthetase family. AsnA subfamily.

Its subcellular location is the cytoplasm. It carries out the reaction L-aspartate + NH4(+) + ATP = L-asparagine + AMP + diphosphate + H(+). Its pathway is amino-acid biosynthesis; L-asparagine biosynthesis; L-asparagine from L-aspartate (ammonia route): step 1/1. This chain is Aspartate--ammonia ligase, found in Haemophilus ducreyi (strain 35000HP / ATCC 700724).